The chain runs to 657 residues: Translation factor GUF1, mitochondrial (657 aa).

The transit peptide at 1–39 (MRGCLQSVKWLTSALRPSQSLASSTRYPRRLLSTSAPRN) directs the protein to the mitochondrion. Residues 59–239 (ERFRNFCIVA…TVIEQIPAPV (181 aa)) enclose the tr-type G domain. GTP is bound by residues 68 to 75 (AHVDHGKS), 132 to 136 (DTPGH), and 186 to 189 (NKVD).

The protein belongs to the TRAFAC class translation factor GTPase superfamily. Classic translation factor GTPase family. LepA subfamily.

It localises to the mitochondrion inner membrane. It carries out the reaction GTP + H2O = GDP + phosphate + H(+). Its function is as follows. Promotes mitochondrial protein synthesis. May act as a fidelity factor of the translation reaction, by catalyzing a one-codon backward translocation of tRNAs on improperly translocated ribosomes. Binds to mitochondrial ribosomes in a GTP-dependent manner. This Ajellomyces capsulatus (strain G186AR / H82 / ATCC MYA-2454 / RMSCC 2432) (Darling's disease fungus) protein is Translation factor GUF1, mitochondrial.